The following is a 237-amino-acid chain: Ribonuclease PH (237 aa).

Residues Arg-86 and Gly-124–Arg-126 each bind phosphate.

The protein belongs to the RNase PH family. As to quaternary structure, homohexameric ring arranged as a trimer of dimers.

The catalysed reaction is tRNA(n+1) + phosphate = tRNA(n) + a ribonucleoside 5'-diphosphate. Phosphorolytic 3'-5' exoribonuclease that plays an important role in tRNA 3'-end maturation. Removes nucleotide residues following the 3'-CCA terminus of tRNAs; can also add nucleotides to the ends of RNA molecules by using nucleoside diphosphates as substrates, but this may not be physiologically important. Probably plays a role in initiation of 16S rRNA degradation (leading to ribosome degradation) during starvation. This chain is Ribonuclease PH, found in Coxiella burnetii (strain RSA 331 / Henzerling II).